The primary structure comprises 201 residues: ATP-dependent Clp protease proteolytic subunit (201 aa).

Ser105 (nucleophile) is an active-site residue. His130 is an active-site residue.

This sequence belongs to the peptidase S14 family. As to quaternary structure, fourteen ClpP subunits assemble into 2 heptameric rings which stack back to back to give a disk-like structure with a central cavity, resembling the structure of eukaryotic proteasomes.

The protein resides in the cytoplasm. The catalysed reaction is Hydrolysis of proteins to small peptides in the presence of ATP and magnesium. alpha-casein is the usual test substrate. In the absence of ATP, only oligopeptides shorter than five residues are hydrolyzed (such as succinyl-Leu-Tyr-|-NHMec, and Leu-Tyr-Leu-|-Tyr-Trp, in which cleavage of the -Tyr-|-Leu- and -Tyr-|-Trp bonds also occurs).. Functionally, cleaves peptides in various proteins in a process that requires ATP hydrolysis. Has a chymotrypsin-like activity. Plays a major role in the degradation of misfolded proteins. The sequence is that of ATP-dependent Clp protease proteolytic subunit from Aquifex aeolicus (strain VF5).